A 140-amino-acid polypeptide reads, in one-letter code: 3-hydroxyacyl-[acyl-carrier-protein] dehydratase FabZ (140 aa).

Residue His-48 is part of the active site.

This sequence belongs to the thioester dehydratase family. FabZ subfamily.

The protein localises to the cytoplasm. It catalyses the reaction a (3R)-hydroxyacyl-[ACP] = a (2E)-enoyl-[ACP] + H2O. Involved in unsaturated fatty acids biosynthesis. Catalyzes the dehydration of short chain beta-hydroxyacyl-ACPs and long chain saturated and unsaturated beta-hydroxyacyl-ACPs. This chain is 3-hydroxyacyl-[acyl-carrier-protein] dehydratase FabZ, found in Latilactobacillus sakei subsp. sakei (strain 23K) (Lactobacillus sakei subsp. sakei).